A 140-amino-acid chain; its full sequence is MAENRESRGTVEAELDPVEYTLRKRLPHRLPRRPNDIYVNMKTDFKAQLARCQKLLDGGARGQNACSEIYIHGLGLAINRAINIALQLQAGSFGSLQVAANTSTVELVDELEPETDSREPLTRIRNNSAIHIRVFRVTPK.

It belongs to the histone-like Alba family. Component of nuclear RNase P and RNase MRP complexes. RNase P consists of a catalytic RNA moiety and 10 different protein chains; POP1, POP4, POP5, POP7, RPP14, RPP21, RPP25, RPP30, RPP38 and RPP40. Within the RNase P complex, POP1, POP7 and RPP25 form the 'finger' subcomplex, POP5, RPP14, RPP40 and homodimeric RPP30 form the 'palm' subcomplex, and RPP21, POP4 and RPP38 form the 'wrist' subcomplex. All subunits of the RNase P complex interact with the catalytic RNA. Several subunits of RNase P are also part of the RNase MRP complex. RNase MRP consists of a catalytic RNA moiety and about 8 protein subunits; POP1, POP7, RPP25, RPP30, RPP38, RPP40 and possibly also POP4 and POP5. Interacts with SMN1. POP7 forms a heterodimer with RPP25 that binds to the P3 stem loop of the catalytic RNA.

It localises to the nucleus. It is found in the nucleolus. Its subcellular location is the cytoplasm. The protein localises to the cytoplasmic granule. In terms of biological role, component of ribonuclease P, a ribonucleoprotein complex that generates mature tRNA molecules by cleaving their 5'-ends. Also a component of the MRP ribonuclease complex, which cleaves pre-rRNA sequences. The sequence is that of Ribonuclease P protein subunit p20 (POP7) from Bos taurus (Bovine).